A 505-amino-acid polypeptide reads, in one-letter code: MINIRPDEISSIIREQIEKYDQDVKVDNIGTVLQVGDGIARVYGLDQVMSGELLEFEDKTIGIALNLENDNVGVVLMGTGRQILEGSTVKATGRIAQIPVGDEFLGRVVSPLGVAIDGKGEIVTSDSRLLEAMAPGIISRKSVCEPLQTGITSIDAMIPIGRGQRELIIGDRQTGKTSIAVDTIINQQTEDVICVYVGVGQKASTIAQVVNVLEEKNAMSYTIVVASSANDPATLQYIAPYAGAALAEYFMYKGKATLIVYDDLTKQAVAYRQMSLLLRRPPGREAYPGDVFYLHSRLLERAAKLSDKLGGGSMTALPIIETQASDVSAYIPTNVISITDGQIFLSNDLFNSGIRPAINVGISVSRVGSAAQTKAMKKVAGKLKLELAQFAELEAFSQFASDLDEATQKQLARGTRLREVLKQPQNSPLSVAQQVALIYTGINGYLDDLPVSNVKSYCASLMTYLTTSKKPYTEIVRTTNQFTEEAESSLKEAILESKEAFSKTN.

170-177 (GDRQTGKT) lines the ATP pocket.

Belongs to the ATPase alpha/beta chains family. As to quaternary structure, F-type ATPases have 2 components, CF(1) - the catalytic core - and CF(0) - the membrane proton channel. CF(1) has five subunits: alpha(3), beta(3), gamma(1), delta(1), epsilon(1). CF(0) has four main subunits: a, b, b' and c.

Its subcellular location is the plastid. The protein localises to the chloroplast thylakoid membrane. The catalysed reaction is ATP + H2O + 4 H(+)(in) = ADP + phosphate + 5 H(+)(out). In terms of biological role, produces ATP from ADP in the presence of a proton gradient across the membrane. The alpha chain is a regulatory subunit. The protein is ATP synthase subunit alpha, chloroplastic of Phaeodactylum tricornutum (strain CCAP 1055/1).